A 447-amino-acid polypeptide reads, in one-letter code: Probable protein phosphatase 2C 71 (447 aa).

The 247-residue stretch at 33-279 folds into the PPM-type phosphatase domain; the sequence is SYGYASSAGK…DNITCVVVRF (247 aa). Mn(2+) contacts are provided by Asp-69, Gly-70, Asp-231, and Asp-270. Low complexity predominate over residues 284–297; that stretch reads SANNNGSSSSEEAN. Residues 284 to 447 are disordered; it reads SANNNGSSSS…ARKTTPSIFN (164 aa). Residues 305 to 331 show a composition bias toward basic and acidic residues; it reads NDSDHKISAKETNQDHTTVNKDLDRNT. Polar residues-rich tracts occupy residues 346-374 and 392-423; these read ADNS…TGEK and KVPN…GSTG. Over residues 424 to 438 the composition is skewed to basic and acidic residues; sequence ERNRKPIKVHSDSAA.

It belongs to the PP2C family. The cofactor is Mg(2+). Requires Mn(2+) as cofactor.

The enzyme catalyses O-phospho-L-seryl-[protein] + H2O = L-seryl-[protein] + phosphate. It catalyses the reaction O-phospho-L-threonyl-[protein] + H2O = L-threonyl-[protein] + phosphate. The chain is Probable protein phosphatase 2C 71 from Arabidopsis thaliana (Mouse-ear cress).